The sequence spans 269 residues: Formamidopyrimidine-DNA glycosylase (269 aa).

P2 serves as the catalytic Schiff-base intermediate with DNA. Catalysis depends on E3, which acts as the Proton donor. The active-site Proton donor; for beta-elimination activity is K57. Residues H90, R109, and K150 each contribute to the DNA site. The FPG-type zinc finger occupies 235–269 (QVYGRKGEPCRVCGTPIVATKHAQRATFYCRQCQK). The active-site Proton donor; for delta-elimination activity is the R259.

This sequence belongs to the FPG family. Monomer. It depends on Zn(2+) as a cofactor.

It carries out the reaction Hydrolysis of DNA containing ring-opened 7-methylguanine residues, releasing 2,6-diamino-4-hydroxy-5-(N-methyl)formamidopyrimidine.. The catalysed reaction is 2'-deoxyribonucleotide-(2'-deoxyribose 5'-phosphate)-2'-deoxyribonucleotide-DNA = a 3'-end 2'-deoxyribonucleotide-(2,3-dehydro-2,3-deoxyribose 5'-phosphate)-DNA + a 5'-end 5'-phospho-2'-deoxyribonucleoside-DNA + H(+). In terms of biological role, involved in base excision repair of DNA damaged by oxidation or by mutagenic agents. Acts as a DNA glycosylase that recognizes and removes damaged bases. Has a preference for oxidized purines, such as 7,8-dihydro-8-oxoguanine (8-oxoG). Has AP (apurinic/apyrimidinic) lyase activity and introduces nicks in the DNA strand. Cleaves the DNA backbone by beta-delta elimination to generate a single-strand break at the site of the removed base with both 3'- and 5'-phosphates. In Escherichia coli O6:H1 (strain CFT073 / ATCC 700928 / UPEC), this protein is Formamidopyrimidine-DNA glycosylase.